Reading from the N-terminus, the 714-residue chain is MEMASAFTLNVRLDNIAIITIDVPGEKMNTLKAEFASQVRAIIKQLRENKELRGVVFISAKPDNFIAGADINMIGNCKTAQEAEVLARQGQQLMAEIHALPVPVIAAIHGACLGGGLELALACHGRVCTDDAKTVLGLPEVQLGLLPGSGGTQRLPRLIGVSTALEMILTGKQLRAKQALKLGLVDDVVPQSILLEAAVELAKQDRPSSRPLPVRERILAGPLGRALLFKMVGKKTEHKTQGNYPATERILEVVETGLAQGTSSGYDAEARAFGELAMTPQSQALRNIFFASTEVKKDPGSDAPPAPLNSVGILGGGLMGGGIAYVTACKAGLPVRIKDINPQGINHALKYSWDQLEGKVRRRHLKASERDKQLALISGTTDYCGFAHRDLIIEAVFENLELKQQMVAEVEQNCATHTIFASNTSSLPIGDIAAHAARPEQVIGLHFFSPVEKMPLVEIIPHASTSAQTIATTVKLAKKQGKTPIVVRDKAGFYVNRILAPYINEAIRMLTEGERIEHIDAALVKFGFPVGPIQLLDEVGIDTGTKIIPVLEAAYGERFSAPANVVSSILNDDRKGRKNGRGFYLYGQKGRKSKKQVDPAIYPLIGAQGQGRLSAPQVAERCVMLMLNEAVRCLDEQVIRSVRDGDIGAVFGIGFPPFLGGPFRYIDSLGAGEVVAIMQRLATQYGSRFTPCERLVEMSKRGESFWKTTATDLQ.

The segment at 1–190 is enoyl-CoA hydratase; the sequence is MEMASAFTLN…KLGLVDDVVP (190 aa). The 3-hydroxyacyl-CoA dehydrogenase stretch occupies residues 306–714; sequence APLNSVGILG…FWKTTATDLQ (409 aa).

In the N-terminal section; belongs to the enoyl-CoA hydratase/isomerase family. The protein in the central section; belongs to the 3-hydroxyacyl-CoA dehydrogenase family. Heterotetramer of two alpha chains (FadJ) and two beta chains (FadI).

The protein resides in the cytoplasm. The enzyme catalyses a (3S)-3-hydroxyacyl-CoA = a (2E)-enoyl-CoA + H2O. It carries out the reaction a 4-saturated-(3S)-3-hydroxyacyl-CoA = a (3E)-enoyl-CoA + H2O. The catalysed reaction is a (3S)-3-hydroxyacyl-CoA + NAD(+) = a 3-oxoacyl-CoA + NADH + H(+). It catalyses the reaction (3S)-3-hydroxybutanoyl-CoA = (3R)-3-hydroxybutanoyl-CoA. Its pathway is lipid metabolism; fatty acid beta-oxidation. Its function is as follows. Catalyzes the formation of a hydroxyacyl-CoA by addition of water on enoyl-CoA. Also exhibits 3-hydroxyacyl-CoA epimerase and 3-hydroxyacyl-CoA dehydrogenase activities. The chain is Fatty acid oxidation complex subunit alpha from Escherichia coli O7:K1 (strain IAI39 / ExPEC).